The chain runs to 274 residues: MENSQELTPWQRLTIARMLERPTSLEYIDLIFDSFMEFHGDRAFGDDAAIVGGVAEFNGMPVTVIGQQKGRNTNENIKRNFGMPSPEGYRKALRLMKQAEKFNRPLICFVDTSGAYCGVEAEQRGQGEAIAKNLISMANLKIPVISVVIGEGGSGGALAMAVADEVWMLENSVYSLLSPEGFASILWKDSSRAKEAAEVMKITADDLKGYGIIDKVIKEPDGGAQNDITMVANALRENLKKAIEGLSSTGINELLDNRYNKFRQIGKFIENEDN.

Residues 1–245 (MENSQELTPW…RENLKKAIEG (245 aa)) form the CoA carboxyltransferase C-terminal domain.

It belongs to the AccA family. As to quaternary structure, acetyl-CoA carboxylase is a heterohexamer composed of biotin carboxyl carrier protein (AccB), biotin carboxylase (AccC) and two subunits each of ACCase subunit alpha (AccA) and ACCase subunit beta (AccD).

It is found in the cytoplasm. It catalyses the reaction N(6)-carboxybiotinyl-L-lysyl-[protein] + acetyl-CoA = N(6)-biotinyl-L-lysyl-[protein] + malonyl-CoA. The protein operates within lipid metabolism; malonyl-CoA biosynthesis; malonyl-CoA from acetyl-CoA: step 1/1. In terms of biological role, component of the acetyl coenzyme A carboxylase (ACC) complex. First, biotin carboxylase catalyzes the carboxylation of biotin on its carrier protein (BCCP) and then the CO(2) group is transferred by the carboxyltransferase to acetyl-CoA to form malonyl-CoA. The polypeptide is Acetyl-coenzyme A carboxylase carboxyl transferase subunit alpha (Clostridium acetobutylicum (strain ATCC 824 / DSM 792 / JCM 1419 / IAM 19013 / LMG 5710 / NBRC 13948 / NRRL B-527 / VKM B-1787 / 2291 / W)).